Here is a 98-residue protein sequence, read N- to C-terminus: NADH-ubiquinone oxidoreductase chain 4L (98 aa).

Transmembrane regions (helical) follow at residues 1–21, 29–49, and 61–81; these read MSMV…GLLM, SLLC…VTIL, and IILL…LVMV.

Belongs to the complex I subunit 4L family. Core subunit of respiratory chain NADH dehydrogenase (Complex I) which is composed of 45 different subunits.

It is found in the mitochondrion inner membrane. It carries out the reaction a ubiquinone + NADH + 5 H(+)(in) = a ubiquinol + NAD(+) + 4 H(+)(out). Core subunit of the mitochondrial membrane respiratory chain NADH dehydrogenase (Complex I) which catalyzes electron transfer from NADH through the respiratory chain, using ubiquinone as an electron acceptor. Part of the enzyme membrane arm which is embedded in the lipid bilayer and involved in proton translocation. The sequence is that of NADH-ubiquinone oxidoreductase chain 4L (MT-ND4L) from Phoca fasciata (Ribbon seal).